Consider the following 433-residue polypeptide: Urokinase-type plasminogen activator (433 aa).

Residues 1–20 (MRALLAHLLLCVLVVSASKG) form the signal peptide. An EGF-like domain is found at 26–62 (VPSDCGCLNGGTCMSNKYFSSIHWCNCPKKFGGQHCE). Intrachain disulfides connect Cys30/Cys38, Cys32/Cys50, Cys52/Cys61, Cys69/Cys150, Cys90/Cys132, and Cys121/Cys145. The binds urokinase plasminogen activator surface receptor stretch occupies residues 33–56 (LNGGTCMSNKYFSSIHWCNCPKKF). The Kringle domain occupies 69-150 (CYEGNGHFYR…RVQECMVHNC (82 aa)). Positions 151 to 177 (ADGKKPSSPPEELQFQCGQRTLRPRFK) are connecting peptide. Phosphoserine is present on Ser157. Intrachain disulfides connect Cys167–Cys298, Cys208–Cys224, Cys216–Cys287, Cys315–Cys384, Cys347–Cys363, and Cys374–Cys402. In terms of domain architecture, Peptidase S1 spans 178–426 (IVGGEFTTIE…FLPWIHSHTR (249 aa)). Active-site charge relay system residues include His223 and Asp274. Asn324 carries N-linked (GlcNAc...) asparagine glycosylation. Ser325 is subject to Phosphoserine. Catalysis depends on Ser378, which acts as the Charge relay system.

This sequence belongs to the peptidase S1 family. In terms of assembly, found in high and low molecular mass forms. Each consists of two chains, A and B. The high molecular mass form contains a long chain A which is cleaved to yield a short chain A. Forms heterodimer with SERPINA5. Binds LRP1B; binding is followed by internalization and degradation. Interacts with MRC2. Interacts with PLAUR. In complex with SERPINE1, interacts with PLAUR/uPAR. Interacts with SORL1 and LRP1, either alone or in complex with SERPINE1; these interactions are abolished in the presence of LRPAP1/RAP. The ternary complex composed of PLAUR-PLAU-PAI1 also interacts with SORLA. Post-translationally, phosphorylation of Ser-157 and Ser-325 abolishes proadhesive ability but does not interfere with receptor binding. Produced as an inactive single-chain protein (pro-uPA or sc-uPA), is processed into the active disulfide-linked two-chain form of PLAU/uPA by a proteolytic event mediated, at least, by TMPRSS4.

It localises to the secreted. It carries out the reaction Specific cleavage of Arg-|-Val bond in plasminogen to form plasmin.. Its activity is regulated as follows. Inhibited by SERPINA5. Inhibited by SERPINE1. In terms of biological role, specifically cleaves the zymogen plasminogen to form the active enzyme plasmin. The protein is Urokinase-type plasminogen activator (PLAU) of Papio cynocephalus (Yellow baboon).